A 711-amino-acid polypeptide reads, in one-letter code: MFNQVKKTMEWGEDTLTLETGKIARQADGCVIATYGETSVMAAVTYARSQKPGQDFFPLTVHYNEKYYAAGKIPGGFFKREARPTEKETLTSRLIDRPIRPLFVDGFKNEVLVICTVLSHDLENDPDIVAMIAASAALTISGVPFMGPIAGARVGYEDGEYVLNPVVDDMHDLRNNPDQRLDLVVAGTKDAVMMVESEAYELSEAEMLGAVKFGHEQMQPVIDLIIELAETAAKEPFDFQPADYSELYAKVKAAGEDQMRAAFAITDKQERVTAISAARDAILATLSDEEQTDPNLGSALKKLESSILRGDVVKNGRRIDGRALDTVRPIQSEVGILPRTHGSALFTRGETQGLVVTTLGTGDDEQFIDALHGNFKSNFLLHYNFPPYSVGEVGRFGPPGRREIGHGKLAWRALQAVLPAATDFPYTIRLVSEITESNGSSSMASVCGGSLSMMDAGVPLKAPVAGVAMGLILEEDGSYAVLTDILGDEDHLGDMDFKVAGTEEGITSLQMDIKVAGITPEIMEKALEQAKAGRLHILGEMSKALSEGRSQFSEHAPRIETMQIPTDKIREVIGSGGKVIREIVETSGAKVDINDDGIIKIASANGEAIKKAYEMIHSIVAEPEEGKVYTGTVVKIVDFGAFVNFFGKRDGLVHVSQIENRRLNHPSDVLKEGQEVKVKLLGFDDRGKVRLSMKVVDQETGEEIKKEAPAD.

Mg(2+) is bound by residues Asp-490 and Asp-496. Positions 557 to 616 (PRIETMQIPTDKIREVIGSGGKVIREIVETSGAKVDINDDGIIKIASANGEAIKKAYEMI) constitute a KH domain. The S1 motif domain maps to 626 to 694 (GKVYTGTVVK…DRGKVRLSMK (69 aa)).

This sequence belongs to the polyribonucleotide nucleotidyltransferase family. It depends on Mg(2+) as a cofactor.

It is found in the cytoplasm. The enzyme catalyses RNA(n+1) + phosphate = RNA(n) + a ribonucleoside 5'-diphosphate. Functionally, involved in mRNA degradation. Catalyzes the phosphorolysis of single-stranded polyribonucleotides processively in the 3'- to 5'-direction. The polypeptide is Polyribonucleotide nucleotidyltransferase (Dinoroseobacter shibae (strain DSM 16493 / NCIMB 14021 / DFL 12)).